Reading from the N-terminus, the 296-residue chain is 4-hydroxy-tetrahydrodipicolinate synthase (296 aa).

A pyruvate-binding site is contributed by Thr49. The active-site Proton donor/acceptor is the Tyr137. Residue Lys166 is the Schiff-base intermediate with substrate of the active site. Residue Ile208 coordinates pyruvate.

The protein belongs to the DapA family. Homotetramer; dimer of dimers.

It is found in the cytoplasm. The enzyme catalyses L-aspartate 4-semialdehyde + pyruvate = (2S,4S)-4-hydroxy-2,3,4,5-tetrahydrodipicolinate + H2O + H(+). It participates in amino-acid biosynthesis; L-lysine biosynthesis via DAP pathway; (S)-tetrahydrodipicolinate from L-aspartate: step 3/4. Catalyzes the condensation of (S)-aspartate-beta-semialdehyde [(S)-ASA] and pyruvate to 4-hydroxy-tetrahydrodipicolinate (HTPA). The sequence is that of 4-hydroxy-tetrahydrodipicolinate synthase from Chlorobium chlorochromatii (strain CaD3).